The primary structure comprises 109 residues: uncharacterized protein (109 aa).

Positions 1–19 (MKKFALLAGLFVFAPMTWA) are cleaved as a signal peptide.

This is an uncharacterized protein from Escherichia coli O6:H1 (strain CFT073 / ATCC 700928 / UPEC).